The chain runs to 88 residues: Small ribosomal subunit protein bS20 (88 aa).

The interval 1 to 26 (MANTAQARKRARQNTKRRQNSASQRS) is disordered. Over residues 7–19 (ARKRARQNTKRRQ) the composition is skewed to basic residues.

This sequence belongs to the bacterial ribosomal protein bS20 family.

Its function is as follows. Binds directly to 16S ribosomal RNA. This Psychrobacter arcticus (strain DSM 17307 / VKM B-2377 / 273-4) protein is Small ribosomal subunit protein bS20.